The chain runs to 331 residues: Ferredoxin--NADP reductase (331 aa).

Glutamate 38, glutamine 46, tyrosine 51, alanine 91, leucine 125, aspartate 282, and serine 323 together coordinate FAD.

It belongs to the ferredoxin--NADP reductase type 2 family. As to quaternary structure, homodimer. It depends on FAD as a cofactor.

The catalysed reaction is 2 reduced [2Fe-2S]-[ferredoxin] + NADP(+) + H(+) = 2 oxidized [2Fe-2S]-[ferredoxin] + NADPH. This is Ferredoxin--NADP reductase from Deinococcus geothermalis (strain DSM 11300 / CIP 105573 / AG-3a).